Reading from the N-terminus, the 860-residue chain is Probable beta-glucosidase A (860 aa).

The N-terminal stretch at 1–19 (MRFTSIEAVALTAVSLASA) is a signal peptide. Asn-61, Asn-211, and Asn-252 each carry an N-linked (GlcNAc...) asparagine glycan. The active site involves Asp-280. 11 N-linked (GlcNAc...) asparagine glycosylation sites follow: Asn-315, Asn-322, Asn-354, Asn-387, Asn-442, Asn-523, Asn-542, Asn-564, Asn-658, Asn-690, and Asn-712.

It belongs to the glycosyl hydrolase 3 family.

It localises to the secreted. It carries out the reaction Hydrolysis of terminal, non-reducing beta-D-glucosyl residues with release of beta-D-glucose.. It functions in the pathway glycan metabolism; cellulose degradation. Its function is as follows. Beta-glucosidases are one of a number of cellulolytic enzymes involved in the degradation of cellulosic biomass. Catalyzes the last step releasing glucose from the inhibitory cellobiose. This Aspergillus niger (strain ATCC MYA-4892 / CBS 513.88 / FGSC A1513) protein is Probable beta-glucosidase A (bglA).